Reading from the N-terminus, the 281-residue chain is 2-dehydro-3-deoxyphosphooctonate aldolase (281 aa).

This sequence belongs to the KdsA family.

It is found in the cytoplasm. The enzyme catalyses D-arabinose 5-phosphate + phosphoenolpyruvate + H2O = 3-deoxy-alpha-D-manno-2-octulosonate-8-phosphate + phosphate. It participates in carbohydrate biosynthesis; 3-deoxy-D-manno-octulosonate biosynthesis; 3-deoxy-D-manno-octulosonate from D-ribulose 5-phosphate: step 2/3. The protein operates within bacterial outer membrane biogenesis; lipopolysaccharide biosynthesis. The chain is 2-dehydro-3-deoxyphosphooctonate aldolase from Pseudomonas syringae pv. syringae (strain B728a).